Here is a 384-residue protein sequence, read N- to C-terminus: Monomeric sarcosine oxidase (384 aa).

6–36 is an FAD binding site; sequence DVIVIGLGGMGSAAAHHLSARGARVLGLEKF. Cysteine 315 carries the S-8alpha-FAD cysteine modification.

This sequence belongs to the MSOX/MTOX family. MSOX subfamily. In terms of assembly, monomer. It depends on FAD as a cofactor.

The protein localises to the cytoplasm. The catalysed reaction is sarcosine + O2 + H2O = formaldehyde + glycine + H2O2. Functionally, catalyzes the oxidative demethylation of sarcosine. This Streptomyces avermitilis (strain ATCC 31267 / DSM 46492 / JCM 5070 / NBRC 14893 / NCIMB 12804 / NRRL 8165 / MA-4680) protein is Monomeric sarcosine oxidase.